Here is an 890-residue protein sequence, read N- to C-terminus: V-type proton ATPase subunit a, Golgi isoform (890 aa).

M1 carries the post-translational modification N-acetylmethionine. Over 1–450 (MNQEEAIFRS…DAYGIATYKE (450 aa)) the chain is Cytoplasmic. Residues 113 to 154 (LENVNDMVKEITDCESRARQLDESLDSLRSKLNDLLEQRQVI) adopt a coiled-coil conformation. S223 and S228 each carry phosphoserine. Residues 297 to 347 (LKKVKRVIDSLNGKIVSLNTRSSELVDTLNRQIDDLQRILDTTEQTLHTEL) adopt a coiled-coil conformation. Residues 451-469 (INAGLATVVTFPFMFAIMF) form a helical membrane-spanning segment. The Vacuolar segment spans residues 470 to 471 (GD). A helical transmembrane segment spans residues 472 to 488 (MGHGFILFLMALFLVLN). Topologically, residues 489 to 502 (ERKFGAMHRDEIFD) are cytoplasmic. Residues 503–532 (MAFTGRYVLLLMGAFSVYTGLLYNDIFSKS) traverse the membrane as a helical segment. Topologically, residues 533–580 (MTIFKSGWQWPSTFRKGESIEAKKTGVYPFGLDFAWHGTDNGLLFSNS) are vacuolar. Residues 581-600 (YKMKLSILMGYAHMTYSFMF) traverse the membrane as a helical segment. Over 601 to 618 (SYINYRAKNSKVDIIGNF) the chain is Cytoplasmic. The chain crosses the membrane as a helical span at residues 619-639 (IPGLVFMQSIFGYLSWAIVYK). Topologically, residues 640–682 (WSKDWIKDDKPAPGLLNMLINMFLAPGTIDDQLYSGQAKLQVV) are vacuolar. The chain crosses the membrane as a helical span at residues 683–702 (LLLAALVCVPWLLLYKPLTL). Residues 703–779 (RRLNKNGGGG…DVMIHQVIHT (77 aa)) lie on the Cytoplasmic side of the membrane. A helical membrane pass occupies residues 780 to 804 (IEFCLNCISHTASYLRLWALSLAHA). The Vacuolar segment spans residues 805–828 (QLSSVLWDMTISNAFSSKNSGSPL). A helical membrane pass occupies residues 829–867 (AVMKVVFLFAMWFVLTVCILVFMEGTSAMLHALRLHWVE). Residues 868–890 (AMSKFFEGEGYAYEPFSFRAIIE) lie on the Cytoplasmic side of the membrane.

It belongs to the V-ATPase 116 kDa subunit family. As to quaternary structure, V-ATPase is a heteromultimeric enzyme composed of a peripheral catalytic V1 complex (components A to H) attached to an integral membrane V0 proton pore complex (components: a, c, c', c'', d, e, f and VOA1). Post-translationally, glycosylated.

It is found in the endosome membrane. It localises to the golgi apparatus membrane. Functionally, subunit of the V0 complex of vacuolar(H+)-ATPase (V-ATPase), a multisubunit enzyme composed of a peripheral complex (V1) that hydrolyzes ATP and a membrane integral complex (V0) that translocates protons. V-ATPase is responsible for acidifying and maintaining the pH of intracellular compartments. Is present only in Golgi- and endosome-residing V-ATPase complexes; enzymes containing this subunit have a 4-fold lower ratio of proton transport to ATP hydrolysis than complexes containing the vacuolar isoform and do not dissociate V1 and V0 in response to glucose depletion. In Saccharomyces cerevisiae (strain ATCC 204508 / S288c) (Baker's yeast), this protein is V-type proton ATPase subunit a, Golgi isoform (STV1).